The chain runs to 427 residues: MKLETKAQGLRGSLRIPGDKSISHRSIMFGSLAKGVTTVRDILRGEDVLSTMQVFRDLGVTIEDDGDVVRIHGVGFDGLKAPQNKLDMGNSGTSIRLISGVLAGQDFDVEMFGDDSLSKRPMDRVTIPLRQMGVEVSGQTDRDLPPLKMHGSKSLKPIYYELPVASAQVKSALIFAALQADGESVIIEKEKTRNHTEDMIQQFGGQLQVEGKEIRISGGQTFTAQEVVVPGDISSAAFWLVAGLVVPNSKIVLKNVGINETRTGIIDVIKNMGGKIKLSDIDQVAKSATITVETSELNGTEIGGDIIPRLIDELPIITLLATQAQGKTVIRDAEELKVKETDRIQVVADALNAMGADIVPTEDGMIITGKTPLHGAEVNTFGDHRIGMMTAIAALLVQDGEVDLQRAEAINTSYPSFFSDLEGLLHG.

3 residues coordinate 3-phosphoshikimate: lysine 20, serine 21, and arginine 25. Lysine 20 is a phosphoenolpyruvate binding site. Phosphoenolpyruvate is bound by residues glycine 92 and arginine 120. 3-phosphoshikimate is bound by residues serine 166, glutamine 168, aspartate 312, and lysine 339. Residue glutamine 168 coordinates phosphoenolpyruvate. Aspartate 312 (proton acceptor) is an active-site residue. Phosphoenolpyruvate-binding residues include arginine 343 and arginine 385.

The protein belongs to the EPSP synthase family. In terms of assembly, monomer.

Its subcellular location is the cytoplasm. It catalyses the reaction 3-phosphoshikimate + phosphoenolpyruvate = 5-O-(1-carboxyvinyl)-3-phosphoshikimate + phosphate. It functions in the pathway metabolic intermediate biosynthesis; chorismate biosynthesis; chorismate from D-erythrose 4-phosphate and phosphoenolpyruvate: step 6/7. Its function is as follows. Catalyzes the transfer of the enolpyruvyl moiety of phosphoenolpyruvate (PEP) to the 5-hydroxyl of shikimate-3-phosphate (S3P) to produce enolpyruvyl shikimate-3-phosphate and inorganic phosphate. This Streptococcus thermophilus (strain ATCC BAA-491 / LMD-9) protein is 3-phosphoshikimate 1-carboxyvinyltransferase.